The chain runs to 295 residues: Aspartate carbamoyltransferase catalytic subunit (295 aa).

Residues R49 and T50 each coordinate carbamoyl phosphate. An L-aspartate-binding site is contributed by K77. 3 residues coordinate carbamoyl phosphate: R99, H127, and Q130. L-aspartate-binding residues include R161 and R212. Positions 251 and 252 each coordinate carbamoyl phosphate.

It belongs to the aspartate/ornithine carbamoyltransferase superfamily. ATCase family. Heterododecamer (2C3:3R2) of six catalytic PyrB chains organized as two trimers (C3), and six regulatory PyrI chains organized as three dimers (R2).

It carries out the reaction carbamoyl phosphate + L-aspartate = N-carbamoyl-L-aspartate + phosphate + H(+). It functions in the pathway pyrimidine metabolism; UMP biosynthesis via de novo pathway; (S)-dihydroorotate from bicarbonate: step 2/3. Its function is as follows. Catalyzes the condensation of carbamoyl phosphate and aspartate to form carbamoyl aspartate and inorganic phosphate, the committed step in the de novo pyrimidine nucleotide biosynthesis pathway. This is Aspartate carbamoyltransferase catalytic subunit from Campylobacter jejuni (strain RM1221).